The following is a 288-amino-acid chain: 4-diphosphocytidyl-2-C-methyl-D-erythritol kinase (288 aa).

The active site involves K11. Position 95 to 105 (95 to 105) interacts with ATP; the sequence is PVAAGMAGGSS. The active site involves D137.

This sequence belongs to the GHMP kinase family. IspE subfamily.

The enzyme catalyses 4-CDP-2-C-methyl-D-erythritol + ATP = 4-CDP-2-C-methyl-D-erythritol 2-phosphate + ADP + H(+). It participates in isoprenoid biosynthesis; isopentenyl diphosphate biosynthesis via DXP pathway; isopentenyl diphosphate from 1-deoxy-D-xylulose 5-phosphate: step 3/6. Catalyzes the phosphorylation of the position 2 hydroxy group of 4-diphosphocytidyl-2C-methyl-D-erythritol. This chain is 4-diphosphocytidyl-2-C-methyl-D-erythritol kinase, found in Lachnospira eligens (strain ATCC 27750 / DSM 3376 / VPI C15-48 / C15-B4) (Eubacterium eligens).